The chain runs to 213 residues: ATP-dependent Clp protease proteolytic subunit (213 aa).

The Nucleophile role is filled by S114. The active site involves H139.

The protein belongs to the peptidase S14 family. In terms of assembly, fourteen ClpP subunits assemble into 2 heptameric rings which stack back to back to give a disk-like structure with a central cavity, resembling the structure of eukaryotic proteasomes.

It localises to the cytoplasm. It carries out the reaction Hydrolysis of proteins to small peptides in the presence of ATP and magnesium. alpha-casein is the usual test substrate. In the absence of ATP, only oligopeptides shorter than five residues are hydrolyzed (such as succinyl-Leu-Tyr-|-NHMec, and Leu-Tyr-Leu-|-Tyr-Trp, in which cleavage of the -Tyr-|-Leu- and -Tyr-|-Trp bonds also occurs).. Cleaves peptides in various proteins in a process that requires ATP hydrolysis. Has a chymotrypsin-like activity. Plays a major role in the degradation of misfolded proteins. The chain is ATP-dependent Clp protease proteolytic subunit from Methylobacillus flagellatus (strain ATCC 51484 / DSM 6875 / VKM B-1610 / KT).